The following is a 769-amino-acid chain: MEVPVDFPISWPCCDTLHAVDPLISLYGVSQKRDEECTHILNASYQSWYPQAVSYNRGSMDASYYFSFSLPWNLPSYIQYLVRPNDPIAVRPTQVLNVRAQQIAEFSGSSESQDRLGHRAKEKLLDREFFLSLLSSASTKREAKSYLARLKASPAKSGQEPTESPKESISASLPSGVNLGSFYGASRAVYDSPVFRQDTTPTPRAQDIPERLHLALIKITTPQLLDNSVINGVAKTLSQLVRLGMACCVVVDPGKTDGHAGRQTAIEQANRISAAVDEQPDSRSFRLDSALSISERGSGLPTVLSRKVLLSALQDGHVVLVPPIAYTEENPRAVTVSANDAALALTKEFAGLSFNPDPDEDPAVTAERIRNLQREVSLDRVIVLDALGGIPAFKGPQSSHVFINMEQEFDQIKDELSQVRNSVSSKQGTSEATYSTLESNPFSKFVNRELVLPEKPTAPPSPGAEVMEEVLDGHLENLRLAQQALAMLPSASSGIITSPQEVSYSARSPQQAASDLSAVGTRRQRNPLIHHLLTDKPLLSSSLPPGRRGAFNGSGSNQFNPVTSHTTFVKRGMPLTILPNPYTKPWRAQMQPRLGLNDPTIDLPRLVTLIEDSFDRKLDVQNYLERVNSRIAGVIVAGEYEGGAILTWETPPGVPDDGSEASAARMVPYLDKFAVLKRSQGAGGVADVVFNAMVRTCFPNGVCWRSRMDNPVNKWYFERSSGTWKLAGSNWAMFWTTPGLVEDTQRFQDYEAVCRSIQPSWADKKNVID.

Residues 150 to 172 (LKASPAKSGQEPTESPKESISAS) form a disordered region. Polar residues predominate over residues 159–172 (QEPTESPKESISAS). The N-acetyltransferase domain occupies 590 to 759 (MQPRLGLNDP…YEAVCRSIQP (170 aa)).

Belongs to the acetyltransferase family.

It is found in the mitochondrion. It catalyses the reaction L-glutamate + acetyl-CoA = N-acetyl-L-glutamate + CoA + H(+). The protein operates within amino-acid biosynthesis; L-arginine biosynthesis; N(2)-acetyl-L-ornithine from L-glutamate: step 1/4. N-acetylglutamate synthase involved in arginine biosynthesis. The protein is Amino-acid acetyltransferase, mitochondrial (arg2) of Penicillium rubens (strain ATCC 28089 / DSM 1075 / NRRL 1951 / Wisconsin 54-1255) (Penicillium chrysogenum).